Here is a 125-residue protein sequence, read N- to C-terminus: Small ribosomal subunit protein uS12 (125 aa).

D89 is subject to 3-methylthioaspartic acid.

It belongs to the universal ribosomal protein uS12 family. Part of the 30S ribosomal subunit. Contacts proteins S8 and S17. May interact with IF1 in the 30S initiation complex.

With S4 and S5 plays an important role in translational accuracy. Its function is as follows. Interacts with and stabilizes bases of the 16S rRNA that are involved in tRNA selection in the A site and with the mRNA backbone. Located at the interface of the 30S and 50S subunits, it traverses the body of the 30S subunit contacting proteins on the other side and probably holding the rRNA structure together. The combined cluster of proteins S8, S12 and S17 appears to hold together the shoulder and platform of the 30S subunit. The protein is Small ribosomal subunit protein uS12 of Acidovorax sp. (strain JS42).